Consider the following 321-residue polypeptide: MSMFLKKQKKTKGGSSEEKRRGRTGSPPRMTSDPGAPRLKRATYFQFPKDGIKETMRKTKDAGDLDDVFFEDCTQCNPPSHVPVFSKPKPRTRAGGAADDSDSESSEDGGEDDEETLHSQDTPPGGSSSDSDDDDQKLPFTATGGIKMPGYMSRISDSSSSSSSSSDSESSSSSDSESDGDRSTPEPDILRQVTSSLARGVSPPRAKPPPAKGEVPVISLLSSEESDSEGEPSPLRAAAAAASQKRKHTSSSSDNDPKHTKVIYISSGESEDEGEGAGAGEGEPLGPEDQVLVVMSQESCEHYMATTPPVAGNPPYNWPWL.

Over residues 1–12 (MSMFLKKQKKTK) the composition is skewed to basic residues. Disordered regions lie at residues 1–59 (MSMF…MRKT) and 71–289 (EDCT…GPED). The span at 50–59 (DGIKETMRKT) shows a compositional bias: basic and acidic residues. The segment covering 99–115 (DDSDSESSEDGGEDDEE) has biased composition (acidic residues). Residues 156–175 (SDSSSSSSSSSDSESSSSSD) are compositionally biased toward low complexity. A compositionally biased stretch (basic and acidic residues) spans 179–189 (DGDRSTPEPDI). Low complexity predominate over residues 231 to 242 (EPSPLRAAAAAA).

This is an uncharacterized protein from Equus caballus (Horse).